The chain runs to 315 residues: Porphobilinogen deaminase (315 aa).

Position 241 is an S-(dipyrrolylmethanemethyl)cysteine (Cys241).

The protein belongs to the HMBS family. In terms of assembly, monomer. The cofactor is dipyrromethane.

The enzyme catalyses 4 porphobilinogen + H2O = hydroxymethylbilane + 4 NH4(+). It functions in the pathway porphyrin-containing compound metabolism; protoporphyrin-IX biosynthesis; coproporphyrinogen-III from 5-aminolevulinate: step 2/4. In terms of biological role, tetrapolymerization of the monopyrrole PBG into the hydroxymethylbilane pre-uroporphyrinogen in several discrete steps. The sequence is that of Porphobilinogen deaminase from Nitratidesulfovibrio vulgaris (strain ATCC 29579 / DSM 644 / CCUG 34227 / NCIMB 8303 / VKM B-1760 / Hildenborough) (Desulfovibrio vulgaris).